The following is a 1755-amino-acid chain: Periplakin (1755 aa).

Over residues 1 to 11 (MHSLFRKRNKG) the composition is skewed to basic residues. Positions 1–20 (MHSLFRKRNKGKYSPTVQTR) are disordered. At Ser14 the chain carries Phosphoserine. 2 coiled-coil regions span residues 16–125 (TVQT…KQMY) and 182–387 (LAKD…QQVV). 3 Spectrin repeats span residues 214 to 315 (QDYM…SHLK), 321 to 483 (HQFH…HALQ), and 503 to 610 (RQLL…EKVD). The SH3 domain occupies 397 to 453 (LKPIPVEALCDFESDQGLISRGYSYTLQKNNGESWELTDSTGKKLAAPAVCFIIPPT). Residue Ser463 is modified to Phosphoserine. Coiled coils occupy residues 611–819 (VANR…RNSH) and 883–1644 (LSSG…SVAV). Ser885, Ser947, Ser1583, and Ser1656 each carry phosphoserine. An interacts with BFSP2 and VIM region spans residues 1556-1755 (ELDFLREENH…ELAVLVSGQK (200 aa)). Plectin repeat units follow at residues 1650-1684 (ENHL…WKMF) and 1699-1734 (VKGP…AAQY).

The protein belongs to the plakin or cytolinker family. Homodimer or a heterodimer with EVPL. Found in a complex composed of PPL (via C-terminal linker domain), BFSP1 and BFSP2 in the retinal lens. Within the complex interacts (via C-terminal linker domain) with BFSP2. Interacts with VIM. Binds to the PH domain of AKT1. Interacts with FCGR1A. May interact with PPHLN1. Expressed in the retinal lens (at protein level).

It is found in the cell junction. Its subcellular location is the desmosome. The protein resides in the cytoplasm. It localises to the cytoskeleton. The protein localises to the cell membrane. Component of the cornified envelope of keratinocytes. May link the cornified envelope to desmosomes and intermediate filaments. May act as a localization signal in PKB/AKT-mediated signaling. In Mus musculus (Mouse), this protein is Periplakin (Ppl).